The primary structure comprises 484 residues: Hexokinase-2 (484 aa).

Residues 21–467 (PQLLEALKPI…SGVGAAVIAA (447 aa)) enclose the Hexokinase domain. Residues 75 to 208 (TGKETGSYLA…GVPIDVVALI (134 aa)) form a hexokinase small subdomain region. Positions 209-456 (NDTTGTLVAS…DPIIIVPAED (248 aa)) are hexokinase large subdomain.

It belongs to the hexokinase family. Monomer.

It is found in the cytoplasm. It carries out the reaction a D-hexose + ATP = a D-hexose 6-phosphate + ADP + H(+). The enzyme catalyses D-fructose + ATP = D-fructose 6-phosphate + ADP + H(+). It catalyses the reaction D-glucose + ATP = D-glucose 6-phosphate + ADP + H(+). It functions in the pathway carbohydrate metabolism; hexose metabolism. Its pathway is carbohydrate degradation; glycolysis; D-glyceraldehyde 3-phosphate and glycerone phosphate from D-glucose: step 1/4. Functionally, catalyzes the phosphorylation of hexose, such as D-glucose and D-fructose, to hexose 6-phosphate (D-glucose 6-phosphate and D-fructose 6-phosphate, respectively). Mediates the initial step of glycolysis by catalyzing phosphorylation of D-glucose to D-glucose 6-phosphate. This Candida albicans (strain SC5314 / ATCC MYA-2876) (Yeast) protein is Hexokinase-2 (HXK2).